The sequence spans 423 residues: Serine--tRNA ligase (423 aa).

231 to 233 (TAE) is an L-serine binding site. ATP is bound at residue 262–264 (RSE). Residue Glu285 participates in L-serine binding. 349-352 (EISS) is a binding site for ATP. Residue Ser384 coordinates L-serine.

Belongs to the class-II aminoacyl-tRNA synthetase family. Type-1 seryl-tRNA synthetase subfamily. As to quaternary structure, homodimer. The tRNA molecule binds across the dimer.

The protein resides in the cytoplasm. It carries out the reaction tRNA(Ser) + L-serine + ATP = L-seryl-tRNA(Ser) + AMP + diphosphate + H(+). The enzyme catalyses tRNA(Sec) + L-serine + ATP = L-seryl-tRNA(Sec) + AMP + diphosphate + H(+). Its pathway is aminoacyl-tRNA biosynthesis; selenocysteinyl-tRNA(Sec) biosynthesis; L-seryl-tRNA(Sec) from L-serine and tRNA(Sec): step 1/1. In terms of biological role, catalyzes the attachment of serine to tRNA(Ser). Is also able to aminoacylate tRNA(Sec) with serine, to form the misacylated tRNA L-seryl-tRNA(Sec), which will be further converted into selenocysteinyl-tRNA(Sec). This is Serine--tRNA ligase from Lactococcus lactis subsp. cremoris (strain MG1363).